Here is a 170-residue protein sequence, read N- to C-terminus: Peptide deformylase (170 aa).

Residues Cys-92 and His-134 each contribute to the Fe cation site. Glu-135 is an active-site residue. His-138 contacts Fe cation.

It belongs to the polypeptide deformylase family. Fe(2+) is required as a cofactor.

The catalysed reaction is N-terminal N-formyl-L-methionyl-[peptide] + H2O = N-terminal L-methionyl-[peptide] + formate. In terms of biological role, removes the formyl group from the N-terminal Met of newly synthesized proteins. Requires at least a dipeptide for an efficient rate of reaction. N-terminal L-methionine is a prerequisite for activity but the enzyme has broad specificity at other positions. The protein is Peptide deformylase of Chromohalobacter salexigens (strain ATCC BAA-138 / DSM 3043 / CIP 106854 / NCIMB 13768 / 1H11).